The sequence spans 3620 residues: Cubilin (3620 aa).

The first 20 residues, 1 to 20, serve as a signal peptide directing secretion; the sequence is MSSPFLWSLIILLTFAESNG. Residues 21 to 32 constitute a propeptide, removed in mature form; it reads EAGGFELQRQKR. Positions 39 to 46 are interaction with AMN; the sequence is PRMATERG. Asn-102 is a glycosylation site (N-linked (GlcNAc...) asparagine). Residues 129-165 form the EGF-like 1 domain; sequence DKKVCSSNPCQNGGTCLNLHDSFFCICPSQWKGPLCS. Intrachain disulfides connect Cys-133–Cys-144, Cys-138–Cys-153, Cys-155–Cys-164, Cys-171–Cys-187, Cys-181–Cys-196, and Cys-198–Cys-207. The region spanning 167–208 is the EGF-like 2; calcium-binding domain; the sequence is DVNECQIYSGTPLGCQNGATCENTAGSYSCLCSPETHGPQCA. Residue Asn-253 is glycosylated (N-linked (GlcNAc...) asparagine). In terms of domain architecture, EGF-like 3; calcium-binding spans 260 to 301; it reads DIDECNLQHAPCSPLVQCFNTQGSFYCGACPTGWQGNGYSCQ. 19 disulfide bridges follow: Cys-264-Cys-277, Cys-271-Cys-286, Cys-289-Cys-300, Cys-306-Cys-321, Cys-313-Cys-330, Cys-333-Cys-344, Cys-350-Cys-363, Cys-357-Cys-373, Cys-396-Cys-406, Cys-401-Cys-415, Cys-417-Cys-426, Cys-433-Cys-444, Cys-438-Cys-453, Cys-455-Cys-464, Cys-471-Cys-497, Cys-524-Cys-546, Cys-587-Cys-613, Cys-640-Cys-662, and Cys-705-Cys-730. The 44-residue stretch at 302 to 345 folds into the EGF-like 4; calcium-binding domain; sequence DIDECKINNGGCSVVPPVMCVNTLGSYHCQACPPGYQGDGRVCT. EGF-like domains lie at 346–382 and 392–427; these read VIDI…YTGN and LSDT…INCT. Residue Asn-425 is glycosylated (N-linked (GlcNAc...) asparagine). Residues 429–465 form the EGF-like 7; calcium-binding domain; that stretch reads NINECLSNPCFNGGTCVDGVNAFSCECTRFWTGFLCQ. CUB domains are found at residues 471–583, 587–699, 705–812, 813–924, 928–1038, 1044–1158, 1162–1274, 1275–1386, 1388–1503, 1507–1616, 1617–1731, 1735–1847, and 1849–1960; these read CGGS…WETQ, CGGI…YLTS, CGGN…YQVA, CGGE…FSAA, CGEI…YEAT, CMED…WDGS, CGGN…YQQT, CRNV…WFIH, CGGE…WQAV, CGGI…FNQV, CGGH…YAAS, CGGT…FTKI, and GNDN…WFAV. Residues Asn-708 and Asn-745 are each glycosylated (N-linked (GlcNAc...) asparagine). An intrachain disulfide couples Cys-757 to Cys-775. The N-linked (GlcNAc...) asparagine glycan is linked to Asn-777. A disulfide bridge connects residues Cys-813 and Cys-838. An N-linked (GlcNAc...) asparagine glycan is attached at Asn-853. 2 cysteine pairs are disulfide-bonded: Cys-865–Cys-887 and Cys-928–Cys-954. A glycan (N-linked (GlcNAc...) asparagine) is linked at Asn-953. Residue Glu-976 participates in Ca(2+) binding. N-linked (GlcNAc...) asparagine glycosylation is present at Asn-980. Cys-981 and Cys-1001 form a disulfide bridge. Asp-984, Asp-1023, Asp-1025, and Leu-1026 together coordinate Ca(2+). Residues Cys-1044 and Cys-1070 are joined by a disulfide bond. 3 residues coordinate Ca(2+): Glu-1092, Asp-1102, and Asp-1143. A disulfide bond links Cys-1099 and Cys-1121. Cys-1162 and Cys-1188 are joined by a disulfide. Asn-1165 carries an N-linked (GlcNAc...) asparagine glycan. Position 1210 (Glu-1210) interacts with Ca(2+). Asn-1214 carries N-linked (GlcNAc...) asparagine glycosylation. A disulfide bridge links Cys-1215 with Cys-1237. Ca(2+)-binding residues include Asp-1218, Asp-1259, and Gln-1262. A disulfide bond links Cys-1275 and Cys-1303. Asn-1304 and Asn-1316 each carry an N-linked (GlcNAc...) asparagine glycan. Position 1325 (Glu-1325) interacts with Ca(2+). An N-linked (GlcNAc...) asparagine glycan is attached at Asn-1329. Cysteines 1330 and 1348 form a disulfide. Asp-1333, Asp-1370, and Val-1372 together coordinate Ca(2+). 2 disulfides stabilise this stretch: Cys-1388/Cys-1414 and Cys-1441/Cys-1463. N-linked (GlcNAc...) asparagine glycosylation occurs at Asn-1497. Cys-1507 and Cys-1533 are joined by a disulfide. N-linked (GlcNAc...) asparagine glycosylation occurs at Asn-1548. Cystine bridges form between Cys-1560-Cys-1578, Cys-1617-Cys-1644, Cys-1672-Cys-1694, Cys-1735-Cys-1761, and Cys-1788-Cys-1809. Asn-1643 carries an N-linked (GlcNAc...) asparagine glycan. Asn-1799, Asn-1816, and Asn-1882 each carry an N-linked (GlcNAc...) asparagine glycan. A disulfide bond links Cys-1902 and Cys-1924. An N-linked (GlcNAc...) asparagine glycan is attached at Asn-1961. 2 disulfides stabilise this stretch: Cys-1975-Cys-2003 and Cys-2029-Cys-2051. CUB domains are found at residues 1975 to 2088, 2089 to 2210, 2214 to 2331, 2333 to 2445, 2449 to 2562, 2567 to 2684, 2686 to 2798, 2802 to 2916, 2917 to 3032, 3034 to 3147, 3154 to 3271, 3275 to 3392, 3392 to 3504, and 3508 to 3620; these read CGGF…FHKS, CGGY…YEAK, CGGN…YAIA, CGGR…FESS, CGGE…YTSS, CGGS…YSFT, CGGI…WNTQ, CGGI…FVSR, CGGN…YKIT, CGGV…FQQT, CGGY…YTTV, CGGT…IAGC, CNRE…WTSS, and CGGT…TWDS. N-linked (GlcNAc...) asparagine glycosylation is found at Asn-2082 and Asn-2114. Disulfide bonds link Cys-2089/Cys-2115, Cys-2214/Cys-2244, and Cys-2272/Cys-2294. The N-linked (GlcNAc...) asparagine glycan is linked to Asn-2317. Cys-2333 and Cys-2360 are oxidised to a cystine. Residues Asn-2383 and Asn-2397 are each glycosylated (N-linked (GlcNAc...) asparagine). 3 disulfide bridges follow: Cys-2387/Cys-2408, Cys-2449/Cys-2475, and Cys-2502/Cys-2524. N-linked (GlcNAc...) asparagine glycans are attached at residues Asn-2528, Asn-2578, Asn-2589, and Asn-2607. A disulfide bond links Cys-2567 and Cys-2596. 7 cysteine pairs are disulfide-bonded: Cys-2625–Cys-2646, Cys-2686–Cys-2712, Cys-2739–Cys-2761, Cys-2802–Cys-2828, Cys-2857–Cys-2880, Cys-2917–Cys-2943, and Cys-2974–Cys-2996. A glycan (N-linked (GlcNAc...) asparagine) is linked at Asn-2810. 3 N-linked (GlcNAc...) asparagine glycosylation sites follow: Asn-2920, Asn-2942, and Asn-2986. Residue Thr-3005 is modified to Phosphothreonine. Intrachain disulfides connect Cys-3034–Cys-3061 and Cys-3088–Cys-3110. Asn-3039, Asn-3100, and Asn-3122 each carry an N-linked (GlcNAc...) asparagine glycan. 2 cysteine pairs are disulfide-bonded: Cys-3154–Cys-3182 and Cys-3212–Cys-3234. N-linked (GlcNAc...) asparagine glycans are attached at residues Asn-3265, Asn-3280, and Asn-3292. 2 cysteine pairs are disulfide-bonded: Cys-3275-Cys-3303 and Cys-3329-Cys-3351. Asn-3354 is a glycosylation site (N-linked (GlcNAc...) asparagine). A disulfide bond links Cys-3392 and Cys-3418. Asn-3427, Asn-3454, and Asn-3530 each carry an N-linked (GlcNAc...) asparagine glycan. 3 cysteine pairs are disulfide-bonded: Cys-3445–Cys-3467, Cys-3508–Cys-3534, and Cys-3561–Cys-3583.

Interacts with AMN. Component of the cubam complex composed of one CUBN trimer and one AMN chain. The cubam complex can dimerize. Interacts with LRP2 in a dual-receptor complex in a calcium-dependent manner. Found in a complex with PID1/PCLI1, LRP1 and CUBNI. Interacts with LRP1 and PID1/PCLI1. In terms of processing, the precursor is cleaved by a trans-Golgi proteinase furin, removing a propeptide. N-glycosylated. As to expression, detected in kidney cortex (at protein level). Detected in kidney, duodenum and jejunum.

It localises to the apical cell membrane. The protein localises to the cell membrane. It is found in the membrane. The protein resides in the coated pit. Its subcellular location is the endosome. It localises to the lysosome membrane. Functionally, endocytic receptor which plays a role in lipoprotein, vitamin and iron metabolism by facilitating their uptake. Acts together with LRP2 to mediate endocytosis of high-density lipoproteins, GC, hemoglobin, ALB, TF and SCGB1A1. Acts together with AMN to mediate endocytosis of the CBLIF-cobalamin complex. Binds to ALB, MB, Kappa and lambda-light chains, TF, hemoglobin, GC, SCGB1A1, APOA1, high density lipoprotein, and the CBLIF-cobalamin complex. Ligand binding requires calcium. Serves as important transporter in several absorptive epithelia, including intestine, renal proximal tubules and embryonic yolk sac. May play an important role in the development of the peri-implantation embryo through internalization of APOA1 and cholesterol. Binds to LGALS3 at the maternal-fetal interface. This Canis lupus familiaris (Dog) protein is Cubilin (CUBN).